A 186-amino-acid chain; its full sequence is Large ribosomal subunit protein uL5 (186 aa).

It belongs to the universal ribosomal protein uL5 family. As to quaternary structure, part of the 50S ribosomal subunit; part of the 5S rRNA/L5/L18/L25 subcomplex. Contacts the 5S rRNA and the P site tRNA. Forms a bridge to the 30S subunit in the 70S ribosome.

In terms of biological role, this is one of the proteins that bind and probably mediate the attachment of the 5S RNA into the large ribosomal subunit, where it forms part of the central protuberance. In the 70S ribosome it contacts protein S13 of the 30S subunit (bridge B1b), connecting the 2 subunits; this bridge is implicated in subunit movement. Contacts the P site tRNA; the 5S rRNA and some of its associated proteins might help stabilize positioning of ribosome-bound tRNAs. The protein is Large ribosomal subunit protein uL5 of Phenylobacterium zucineum (strain HLK1).